An 89-amino-acid polypeptide reads, in one-letter code: Phosphocarrier protein HPr (89 aa).

One can recognise an HPr domain in the interval Met1 to Gly88. The active-site Pros-phosphohistidine intermediate is His15. Ser46 carries the post-translational modification Phosphoserine; by HPrK/P.

It belongs to the HPr family.

The protein resides in the cytoplasm. Phosphorylation on Ser-46 inhibits the phosphoryl transfer from enzyme I to HPr. In terms of biological role, general (non sugar-specific) component of the phosphoenolpyruvate-dependent sugar phosphotransferase system (sugar PTS). This major carbohydrate active-transport system catalyzes the phosphorylation of incoming sugar substrates concomitantly with their translocation across the cell membrane. The phosphoryl group from phosphoenolpyruvate (PEP) is transferred to the phosphoryl carrier protein HPr by enzyme I. Phospho-HPr then transfers it to the PTS EIIA domain. The polypeptide is Phosphocarrier protein HPr (ptsH) (Neisseria meningitidis serogroup A / serotype 4A (strain DSM 15465 / Z2491)).